A 496-amino-acid polypeptide reads, in one-letter code: Lysosomal Pro-X carboxypeptidase (496 aa).

An N-terminal signal peptide occupies residues 1–21 (MGRRALLLLLLSFLAPWATIA). A propeptide spanning residues 22 to 45 (LRPALRALGSLHLPTNPTSLPAVA) is cleaved from the precursor. Asn-47 and Asn-101 each carry an N-linked (GlcNAc...) asparagine glycan. Ser-179 acts as the Charge relay system in catalysis. The tract at residues 194 to 334 (HMVVGALAAS…QNIFQALNVY (141 aa)) is SKS domain. 4 cysteine pairs are disulfide-bonded: Cys-215–Cys-372, Cys-233–Cys-310, Cys-264–Cys-343, and Cys-364–Cys-394. N-linked (GlcNAc...) asparagine glycans are attached at residues Asn-317, Asn-336, and Asn-345. Residue Asn-415 is glycosylated (N-linked (GlcNAc...) asparagine). Catalysis depends on charge relay system residues Asp-430 and His-455.

Belongs to the peptidase S28 family. In terms of assembly, homodimer. In terms of tissue distribution, highest levels in placenta, lung and liver. Also present in heart, brain, pancreas and kidney.

Its subcellular location is the lysosome. It carries out the reaction Cleavage of a -Pro-|-Xaa bond to release a C-terminal amino acid.. Functionally, cleaves C-terminal amino acids linked to proline in peptides such as angiotensin II, III and des-Arg9-bradykinin. This cleavage occurs at acidic pH, but enzymatic activity is retained with some substrates at neutral pH. This is Lysosomal Pro-X carboxypeptidase (PRCP) from Homo sapiens (Human).